Here is a 96-residue protein sequence, read N- to C-terminus: Acylphosphatase (96 aa).

The region spanning 4-91 is the Acylphosphatase-like domain; it reads RVHVYVKGKV…GEFDDFRILY (88 aa). Catalysis depends on residues arginine 19 and asparagine 37.

Belongs to the acylphosphatase family.

It catalyses the reaction an acyl phosphate + H2O = a carboxylate + phosphate + H(+). The chain is Acylphosphatase (acyP) from Syntrophus aciditrophicus (strain SB).